A 209-amino-acid chain; its full sequence is NADH-quinone oxidoreductase subunit C (209 aa).

Belongs to the complex I 30 kDa subunit family. NDH-1 is composed of 14 different subunits. Subunits NuoB, C, D, E, F, and G constitute the peripheral sector of the complex.

The protein resides in the cell inner membrane. It catalyses the reaction a quinone + NADH + 5 H(+)(in) = a quinol + NAD(+) + 4 H(+)(out). Functionally, NDH-1 shuttles electrons from NADH, via FMN and iron-sulfur (Fe-S) centers, to quinones in the respiratory chain. The immediate electron acceptor for the enzyme in this species is believed to be ubiquinone. Couples the redox reaction to proton translocation (for every two electrons transferred, four hydrogen ions are translocated across the cytoplasmic membrane), and thus conserves the redox energy in a proton gradient. This Xanthobacter autotrophicus (strain ATCC BAA-1158 / Py2) protein is NADH-quinone oxidoreductase subunit C.